Reading from the N-terminus, the 162-residue chain is Small ribosomal subunit protein uS13 (162 aa).

Residues 142-162 (RGQRTKSTGRRGSTVGVSRKK) are disordered.

It belongs to the universal ribosomal protein uS13 family. In terms of assembly, part of the 30S ribosomal subunit. Forms a loose heterodimer with protein S19. Forms two bridges to the 50S subunit in the 70S ribosome.

Functionally, located at the top of the head of the 30S subunit, it contacts several helices of the 16S rRNA. In the 70S ribosome it contacts the 23S rRNA (bridge B1a) and protein L5 of the 50S subunit (bridge B1b), connecting the 2 subunits; these bridges are implicated in subunit movement. This is Small ribosomal subunit protein uS13 from Methanosarcina mazei (strain ATCC BAA-159 / DSM 3647 / Goe1 / Go1 / JCM 11833 / OCM 88) (Methanosarcina frisia).